Reading from the N-terminus, the 67-residue chain is Small ribosomal subunit protein eS27 (67 aa).

Zn(2+) is bound by residues Cys-22, Cys-25, Cys-41, and Cys-44. The C4-type zinc-finger motif lies at 22-44 (CPDCGNEQVVFSHAAMVVRCLVC).

Belongs to the eukaryotic ribosomal protein eS27 family. Part of the 30S ribosomal subunit. It depends on Zn(2+) as a cofactor.

The chain is Small ribosomal subunit protein eS27 from Pyrobaculum islandicum (strain DSM 4184 / JCM 9189 / GEO3).